Consider the following 184-residue polypeptide: Chaperone protein YcdY (184 aa).

Belongs to the TorD/DmsD family. Interacts with YcdX.

In terms of biological role, acts as a chaperone that increases YcdX activity, maybe by facilitating the correct insertion of the zinc ions into the catalytic site of YcdX. Involved in the swarming motility process. The polypeptide is Chaperone protein YcdY (ycdY) (Escherichia coli (strain K12)).